We begin with the raw amino-acid sequence, 459 residues long: MAQKYFGTDGIRGKANVFPMTPDFAMKVGMAVGVLFRSQRQSRRVVIGKDTRLSGYMLENALVSGFTAAGMEAFLLGPVPTPAVAMLCRSLRADLGVMISASHNPFYDNGIKLFGPDGFKLSDEIEKKIEQLIDTDLSKSLASCAEIGYAKRVEGDIYRYIEYAKRTLPRDVRLDALRIVVDCANGAAYKAAPRALWELGAEVFAINDAPNGTNINQKCGSTDLASLKQKVHEVRADVGIALDGDGDRVLIVDEKAQTVDGDQLIAVIAEHWHKTGRLQGNGVVTTIMSNLGLERFLNRKGLELVRTNVGDRYVVDAMRQKGYNIGGEASGHIVLSDFGTTGDGLVAALQILACMQESQSSMSHLCKRFEPVPQILKNVTIKNKNVLKKNQVKTAIDQATQRLGNEARLVIRASGTEPVIRIMGEGDEREVLDAVVAEMVDVIAHHDALSKVGASLEGS.

The active-site Phosphoserine intermediate is the S102. The Mg(2+) site is built by S102, D243, D245, and D247. S102 is modified (phosphoserine).

The protein belongs to the phosphohexose mutase family. Requires Mg(2+) as cofactor. In terms of processing, activated by phosphorylation.

The enzyme catalyses alpha-D-glucosamine 1-phosphate = D-glucosamine 6-phosphate. Functionally, catalyzes the conversion of glucosamine-6-phosphate to glucosamine-1-phosphate. In Bartonella quintana (strain Toulouse) (Rochalimaea quintana), this protein is Phosphoglucosamine mutase.